We begin with the raw amino-acid sequence, 653 residues long: Fructose-1,6-bisphosphatase class 3 (653 aa).

This sequence belongs to the FBPase class 3 family. The cofactor is Mn(2+).

The catalysed reaction is beta-D-fructose 1,6-bisphosphate + H2O = beta-D-fructose 6-phosphate + phosphate. It participates in carbohydrate biosynthesis; gluconeogenesis. In Listeria monocytogenes serovar 1/2a (strain ATCC BAA-679 / EGD-e), this protein is Fructose-1,6-bisphosphatase class 3.